A 182-amino-acid chain; its full sequence is CASP-like protein 5B1 (182 aa).

The segment at 1–20 is disordered; sequence GDASHAVDHPIGGHPEHEHD. Residues 1–41 are Cytoplasmic-facing; sequence GDASHAVDHPIGGHPEHEHDLREEEGPLIFPMKDLPGTPGT. The helical transmembrane segment at 42-62 threads the bilayer; it reads VGGLALRMGQFIFAAASVVIM. Over 63–73 the chain is Extracellular; sequence VTSDEFINFTA. N-linked (GlcNAc...) asparagine glycosylation is present at Asn70. A helical membrane pass occupies residues 74 to 94; it reads FCYLAAAMALQFLWSFVLATI. Over 95–108 the chain is Cytoplasmic; it reads DVYALLIKRGLPNS. The chain crosses the membrane as a helical span at residues 109–129; the sequence is ILLSLFVVGDWVTATLSLAAA. At 130–159 the chain is on the extracellular side; it reads CSTAGITVLFDKDLNYCDQMHCRRYQLSAT. The helical transmembrane segment at 160 to 180 threads the bilayer; that stretch reads MAFFSWVLIAISSLITLLLLV. At 181–182 the chain is on the cytoplasmic side; it reads SE.

This sequence belongs to the Casparian strip membrane proteins (CASP) family. In terms of assembly, homodimer and heterodimers.

It localises to the cell membrane. The protein is CASP-like protein 5B1 of Picea sitchensis (Sitka spruce).